The chain runs to 436 residues: Bystin (436 aa).

Threonine 145 carries the phosphothreonine modification. A phosphoserine mark is found at serine 148 and serine 152.

This sequence belongs to the bystin family.

The protein resides in the nucleus. It is found in the nucleolus. Required for processing of 20S pre-rRNA precursor and biogenesis of 40S ribosomal subunits. The sequence is that of Bystin (bys) from Drosophila melanogaster (Fruit fly).